Here is a 432-residue protein sequence, read N- to C-terminus: Gamma-glutamyl phosphate reductase (432 aa).

Belongs to the gamma-glutamyl phosphate reductase family.

The protein resides in the cytoplasm. The catalysed reaction is L-glutamate 5-semialdehyde + phosphate + NADP(+) = L-glutamyl 5-phosphate + NADPH + H(+). The protein operates within amino-acid biosynthesis; L-proline biosynthesis; L-glutamate 5-semialdehyde from L-glutamate: step 2/2. Catalyzes the NADPH-dependent reduction of L-glutamate 5-phosphate into L-glutamate 5-semialdehyde and phosphate. The product spontaneously undergoes cyclization to form 1-pyrroline-5-carboxylate. In Corynebacterium melassecola, this protein is Gamma-glutamyl phosphate reductase.